The primary structure comprises 145 residues: Allergen MAG29 (145 aa).

Disordered stretches follow at residues 1-21 (KDDI…DDKQ) and 103-145 (AGGA…EEVD). Positions 104 to 137 (GGAGAGGMPGGFPGGFPGTDGSGGGAAGGDGGKS) are enriched in gly residues.

It belongs to the heat shock protein 70 family.

This is Allergen MAG29 (MAG29) from Dermatophagoides farinae (American house dust mite).